Consider the following 146-residue polypeptide: Prolactin-inducible protein homolog (146 aa).

A signal peptide spans 1 to 28 (MHLLQLLFRASPATLLLVLCLQLGANKA). The residue at position 29 (Gln-29) is a Pyrrolidone carboxylic acid. 2 disulfide bridges follow: Cys-65–Cys-91 and Cys-89–Cys-123. Residue Asn-105 is glycosylated (N-linked (GlcNAc...) asparagine).

This sequence belongs to the PIP family. In terms of assembly, monomer. Interacts with AZGP1.

It localises to the secreted. In Pongo pygmaeus (Bornean orangutan), this protein is Prolactin-inducible protein homolog (PIP).